The following is a 436-amino-acid chain: 3-phosphoshikimate 1-carboxyvinyltransferase (436 aa).

Lys23, Ser24, and Arg28 together coordinate 3-phosphoshikimate. A phosphoenolpyruvate-binding site is contributed by Lys23. 2 residues coordinate phosphoenolpyruvate: Gly97 and Arg126. Ser171, Gln173, Asp323, and Lys350 together coordinate 3-phosphoshikimate. Gln173 contacts phosphoenolpyruvate. The active-site Proton acceptor is the Asp323. The phosphoenolpyruvate site is built by Arg354 and Arg396.

Belongs to the EPSP synthase family. As to quaternary structure, monomer.

It is found in the cytoplasm. It carries out the reaction 3-phosphoshikimate + phosphoenolpyruvate = 5-O-(1-carboxyvinyl)-3-phosphoshikimate + phosphate. It functions in the pathway metabolic intermediate biosynthesis; chorismate biosynthesis; chorismate from D-erythrose 4-phosphate and phosphoenolpyruvate: step 6/7. Its function is as follows. Catalyzes the transfer of the enolpyruvyl moiety of phosphoenolpyruvate (PEP) to the 5-hydroxyl of shikimate-3-phosphate (S3P) to produce enolpyruvyl shikimate-3-phosphate and inorganic phosphate. The protein is 3-phosphoshikimate 1-carboxyvinyltransferase of Prochlorococcus marinus (strain MIT 9301).